Consider the following 237-residue polypeptide: DNA repair protein RecO (237 aa).

It belongs to the RecO family.

Its function is as follows. Involved in DNA repair and RecF pathway recombination. The protein is DNA repair protein RecO of Rickettsia felis (strain ATCC VR-1525 / URRWXCal2) (Rickettsia azadi).